A 194-amino-acid polypeptide reads, in one-letter code: Peroxynitrite isomerase 1 (194 aa).

The short motif at 40–46 (GVWRGEG) is the GXWXGXG element. Residues lysine 157 and histidine 184 each contribute to the heme b site.

Belongs to the nitrobindin family. Homodimer. Heme b serves as cofactor.

The enzyme catalyses peroxynitrite = nitrate. It functions in the pathway nitrogen metabolism. Heme-binding protein able to scavenge peroxynitrite and to protect free L-tyrosine against peroxynitrite-mediated nitration, by acting as a peroxynitrite isomerase that converts peroxynitrite to nitrate. Therefore, this protein likely plays a role in peroxynitrite sensing and in the detoxification of reactive nitrogen and oxygen species (RNS and ROS, respectively). Is able to bind nitric oxide (NO) in vitro, but may act as a sensor of peroxynitrite levels in vivo. The polypeptide is Peroxynitrite isomerase 1 (Mycobacterium ulcerans (strain Agy99)).